The sequence spans 384 residues: Actin-related protein 2/3 complex subunit 1 (384 aa).

WD repeat units lie at residues 61–99 (DHDK…TYKP), 105–146 (RINR…WVSK), 151–190 (PIKS…LDSK), 212–251 (YQGS…QSVN), and 349–383 (AHEN…VIYT).

This sequence belongs to the WD repeat ARPC1 family. As to quaternary structure, component of the Arp2/3 complex composed of ARP2, ARP3, ARC40/p41-ARC, ARC35/p34-ARC, ARC18/p21-ARC, ARC19/p20-ARC and ARC16/p16-ARC.

It localises to the cytoplasm. The protein localises to the cytoskeleton. It is found in the actin patch. In terms of biological role, functions as a component of the Arp2/3 complex which is involved in regulation of actin polymerization and together with an activating nucleation-promoting factor (NPF) mediates the formation of branched actin networks. This Saccharomyces cerevisiae (strain ATCC 204508 / S288c) (Baker's yeast) protein is Actin-related protein 2/3 complex subunit 1 (ARC40).